A 122-amino-acid polypeptide reads, in one-letter code: Holo-[acyl-carrier-protein] synthase (122 aa).

Mg(2+) contacts are provided by aspartate 5 and glutamate 54.

The protein belongs to the P-Pant transferase superfamily. AcpS family. The cofactor is Mg(2+).

It localises to the cytoplasm. It catalyses the reaction apo-[ACP] + CoA = holo-[ACP] + adenosine 3',5'-bisphosphate + H(+). Transfers the 4'-phosphopantetheine moiety from coenzyme A to a Ser of acyl-carrier-protein. The protein is Holo-[acyl-carrier-protein] synthase of Aquifex aeolicus (strain VF5).